Reading from the N-terminus, the 643-residue chain is Threonine--tRNA ligase (643 aa).

A TGS domain is found at 1–61 (MIKVTLKDGS…KEDVSLSICT (61 aa)). The interval 240–540 (DHNKLGRELK…LIEKYAGAFP (301 aa)) is catalytic. 3 residues coordinate Zn(2+): cysteine 335, histidine 386, and histidine 517.

This sequence belongs to the class-II aminoacyl-tRNA synthetase family. As to quaternary structure, homodimer. Zn(2+) is required as a cofactor.

The protein resides in the cytoplasm. It carries out the reaction tRNA(Thr) + L-threonine + ATP = L-threonyl-tRNA(Thr) + AMP + diphosphate + H(+). Catalyzes the attachment of threonine to tRNA(Thr) in a two-step reaction: L-threonine is first activated by ATP to form Thr-AMP and then transferred to the acceptor end of tRNA(Thr). Also edits incorrectly charged L-seryl-tRNA(Thr). The protein is Threonine--tRNA ligase of Clostridium botulinum (strain Eklund 17B / Type B).